The following is a 93-amino-acid chain: Co-chaperonin GroES (93 aa).

The protein belongs to the GroES chaperonin family. Heptamer of 7 subunits arranged in a ring. Interacts with the chaperonin GroEL.

It is found in the cytoplasm. Together with the chaperonin GroEL, plays an essential role in assisting protein folding. The GroEL-GroES system forms a nano-cage that allows encapsulation of the non-native substrate proteins and provides a physical environment optimized to promote and accelerate protein folding. GroES binds to the apical surface of the GroEL ring, thereby capping the opening of the GroEL channel. This chain is Co-chaperonin GroES, found in Streptococcus sanguinis.